The primary structure comprises 357 residues: Cyclin-Y (357 aa).

Residues 1–13 show a composition bias toward polar residues; the sequence is MGNSSCCLRTRSS. Residues 1–23 form a disordered region; the sequence is MGNSSCCLRTRSSSGEDKSYNND. The region spanning 186 to 284 is the Cyclin N-terminal domain; it reads PDHRNIYRFV…RFLECLDFNI (99 aa).

This sequence belongs to the cyclin family. Interacts with pct-1; the interaction is required to activate pct-1.

Its subcellular location is the cytoplasm. The protein resides in the cell projection. It is found in the dendrite. The protein localises to the axon. Its function is as follows. In association with pct-1, regulates the trafficking of synaptic vesicle precursors in DA motor neurons by promoting anterograde trafficking to the axon and preventing dynein-dependent trafficking to the dendrite. May also regulate synaptic vesicle trafficking in DD motor neurons and in RIA interneurons. Involved in synapse formation during DD motor neuron remodeling by disassembling ventral presynaptic structures. May activate cdk-5. This Caenorhabditis elegans protein is Cyclin-Y.